A 133-amino-acid polypeptide reads, in one-letter code: Arsenate reductase 1 (133 aa).

Active-site nucleophile residues include Cys-10, Cys-82, and Cys-89. Disulfide bonds link Cys-10-Cys-82 and Cys-82-Cys-89.

This sequence belongs to the low molecular weight phosphotyrosine protein phosphatase family. Thioredoxin-coupled ArsC subfamily.

The protein resides in the cytoplasm. It carries out the reaction arsenate + [thioredoxin]-dithiol + H(+) = arsenite + [thioredoxin]-disulfide + H2O. Catalyzes the reduction of arsenate [As(V)] to arsenite [As(III)]. This chain is Arsenate reductase 1, found in Staphylococcus haemolyticus (strain JCSC1435).